The primary structure comprises 317 residues: 4-diphosphocytidyl-2-C-methyl-D-erythritol kinase (317 aa).

Lys-11 is a catalytic residue. Pro-99–Thr-109 provides a ligand contact to ATP. Asp-141 is a catalytic residue.

Belongs to the GHMP kinase family. IspE subfamily.

The enzyme catalyses 4-CDP-2-C-methyl-D-erythritol + ATP = 4-CDP-2-C-methyl-D-erythritol 2-phosphate + ADP + H(+). It functions in the pathway isoprenoid biosynthesis; isopentenyl diphosphate biosynthesis via DXP pathway; isopentenyl diphosphate from 1-deoxy-D-xylulose 5-phosphate: step 3/6. In terms of biological role, catalyzes the phosphorylation of the position 2 hydroxy group of 4-diphosphocytidyl-2C-methyl-D-erythritol. This chain is 4-diphosphocytidyl-2-C-methyl-D-erythritol kinase, found in Trichormus variabilis (strain ATCC 29413 / PCC 7937) (Anabaena variabilis).